Here is a 1954-residue protein sequence, read N- to C-terminus: Chromodomain-helicase-DNA-binding protein 5 (1954 aa).

Disordered regions lie at residues 1-134 (MRGP…PKSS) and 225-338 (PLAV…GDGY). 2 stretches are compositionally biased toward acidic residues: residues 17 to 37 (EEME…EAFD) and 72 to 90 (NDEL…ESEG). The segment covering 96–115 (NKKKKKKLKDKKEKKAKRKK) has biased composition (basic residues). Positions 227-237 (AVSPPQVPQPV) are enriched in pro residues. The span at 251-272 (GVRKKIKGSKDGKKKGKGKKTA) shows a compositional bias: basic residues. Residues 291-301 (SEEDEREESDF) are compositionally biased toward acidic residues. Basic residues predominate over residues 321–330 (KKSKRRRKKK). PHD-type zinc fingers lie at residues 343–390 (QDYC…CEKE) and 416–463 (MEFC…CTCP). The segment at 343–653 (QDYCEVCQQG…HRELMLGEDT (311 aa)) is histone-binding. Residues 497 to 554 (LPPPKPLEGIPEREFFVKWAGLSYWHCSWVKELQLELYHTVMYRNYQRKNDMDEPPPF) enclose the Chromo 1 domain. The disordered stretch occupies residues 549 to 571 (DEPPPFDYGSGDEDGKSEKRKNK). Residues 561 to 571 (EDGKSEKRKNK) are compositionally biased toward basic and acidic residues. Residues 592–653 (MMIHRILNHS…HRELMLGEDT (62 aa)) form the Chromo 2 domain. The Helicase ATP-binding domain maps to 712 to 896 (RFSWAQGTDT…FHLLNFLTPE (185 aa)). 725-732 (DEMGLGKT) provides a ligand contact to ATP. The DEAH box signature appears at 847-850 (DEAH). The region spanning 1028–1193 (LLQKMLKKLR…MTKQELDDIL (166 aa)) is the Helicase C-terminal domain. Disordered stretches follow at residues 1209–1253 (MSQG…EDSS), 1351–1411 (YNDA…LPPL), 1524–1564 (YSTP…APLG), 1597–1640 (AALD…REEV), and 1658–1696 (SRGD…KKED). 2 stretches are compositionally biased toward acidic residues: residues 1355 to 1366 (SQEDQEWQDELS) and 1376 to 1385 (SEDEDEDFEE). Position 1390 is an N5-methylglutamine (Q1390). S1554 carries the phosphoserine modification. Over residues 1554–1564 (SPAHLLPAPLG) the composition is skewed to low complexity. 2 stretches are compositionally biased toward basic and acidic residues: residues 1600–1627 (DRVE…ETEK) and 1658–1678 (SRGD…KEPI).

This sequence belongs to the SNF2/RAD54 helicase family. In terms of assembly, component of the nucleosome remodeling and deacetylase (NuRD) repressor complex, composed of core proteins MTA1, MTA2, MTA3, RBBP4, RBBP7, HDAC1, HDAC2, MBD2, MBD3, and peripherally associated proteins CDK2AP1, CDK2AP2, GATAD2A, GATAD2B, CHD3, CHD4 and CHD5. The exact stoichiometry of the NuRD complex is unknown, and some subunits such as MBD2 and MBD3, GATAD2A and GATAD2B, and CHD3, CHD4 and CHD5 define mutually exclusive NuRD complexes. Interacts with HDAC2. Methylated at Gln-1390 by N6AMT1. As to expression, preferentially expressed in total brain, fetal brain, and cerebellum. It is also moderately expressed in the adrenal gland and detected in testis.

It localises to the nucleus. The protein localises to the chromosome. It carries out the reaction ATP + H2O = ADP + phosphate + H(+). Its function is as follows. ATP-dependent chromatin-remodeling factor that binds DNA through histones and regulates gene transcription. May specifically recognize and bind trimethylated 'Lys-27' (H3K27me3) and non-methylated 'Lys-4' of histone H3. Acts as a component of the histone deacetylase NuRD complex which participates in the remodeling of chromatin. Plays a role in the development of the nervous system by activating the expression of genes promoting neuron terminal differentiation. In parallel, it may also positively regulate the trimethylation of histone H3 at 'Lys-27' thereby specifically repressing genes that promote the differentiation into non-neuronal cell lineages. Regulates the expression of genes involved in cell proliferation and differentiation. Downstream activated genes may include CDKN2A that positively regulates the p53/TP53 pathway, which in turn, prevents cell proliferation. In spermatogenesis, it probably regulates histone hyperacetylation and the replacement of histones by transition proteins in chromatin, a crucial step in the condensation of spermatid chromatin and the production of functional spermatozoa. The chain is Chromodomain-helicase-DNA-binding protein 5 from Homo sapiens (Human).